Reading from the N-terminus, the 431-residue chain is Adenylosuccinate synthetase (431 aa).

GTP is bound by residues glycine 12 to lysine 18 and glycine 40 to threonine 42. The active-site Proton acceptor is aspartate 13. 2 residues coordinate Mg(2+): aspartate 13 and glycine 40. Residues aspartate 13–lysine 16, asparagine 38–histidine 41, threonine 128, arginine 142, glutamine 223, threonine 238, and arginine 301 each bind IMP. Histidine 41 functions as the Proton donor in the catalytic mechanism. Position 297 to 303 (threonine 297 to arginine 303) interacts with substrate. Residues arginine 303, serine 329–aspartate 331, and serine 411–glycine 413 each bind GTP.

Belongs to the adenylosuccinate synthetase family. As to quaternary structure, homodimer. Mg(2+) serves as cofactor.

It localises to the cytoplasm. The enzyme catalyses IMP + L-aspartate + GTP = N(6)-(1,2-dicarboxyethyl)-AMP + GDP + phosphate + 2 H(+). The protein operates within purine metabolism; AMP biosynthesis via de novo pathway; AMP from IMP: step 1/2. Its function is as follows. Plays an important role in the de novo pathway of purine nucleotide biosynthesis. Catalyzes the first committed step in the biosynthesis of AMP from IMP. This Lacticaseibacillus paracasei (strain ATCC 334 / BCRC 17002 / CCUG 31169 / CIP 107868 / KCTC 3260 / NRRL B-441) (Lactobacillus paracasei) protein is Adenylosuccinate synthetase.